The chain runs to 360 residues: Probable dual-specificity RNA methyltransferase RlmN (360 aa).

Glutamate 91 acts as the Proton acceptor in catalysis. A Radical SAM core domain is found at glutamine 97–aspartate 335. An intrachain disulfide couples cysteine 104 to cysteine 340. The [4Fe-4S] cluster site is built by cysteine 111, cysteine 115, and cysteine 118. Residues glycine 163–glutamate 164, serine 195, serine 218–histidine 220, and asparagine 296 each bind S-adenosyl-L-methionine. Cysteine 340 acts as the S-methylcysteine intermediate in catalysis.

This sequence belongs to the radical SAM superfamily. RlmN family. [4Fe-4S] cluster serves as cofactor.

The protein resides in the cytoplasm. It catalyses the reaction adenosine(2503) in 23S rRNA + 2 reduced [2Fe-2S]-[ferredoxin] + 2 S-adenosyl-L-methionine = 2-methyladenosine(2503) in 23S rRNA + 5'-deoxyadenosine + L-methionine + 2 oxidized [2Fe-2S]-[ferredoxin] + S-adenosyl-L-homocysteine. The enzyme catalyses adenosine(37) in tRNA + 2 reduced [2Fe-2S]-[ferredoxin] + 2 S-adenosyl-L-methionine = 2-methyladenosine(37) in tRNA + 5'-deoxyadenosine + L-methionine + 2 oxidized [2Fe-2S]-[ferredoxin] + S-adenosyl-L-homocysteine. Specifically methylates position 2 of adenine 2503 in 23S rRNA and position 2 of adenine 37 in tRNAs. The protein is Probable dual-specificity RNA methyltransferase RlmN of Streptococcus equi subsp. zooepidemicus (strain H70).